The following is a 48-amino-acid chain: 4-carboxymuconolactone decarboxylase (48 aa).

Belongs to the carboxymuconolactone decarboxylase family.

It carries out the reaction (R)-2-(carboxymethyl)-5-oxo-2,5-dihydro-2-furoate + H(+) = (4,5-dihydro-5-oxofuran-2-yl)-acetate + CO2. It functions in the pathway aromatic compound metabolism; beta-ketoadipate pathway; 5-oxo-4,5-dihydro-2-furylacetate from 3-carboxy-cis,cis-muconate: step 2/2. The polypeptide is 4-carboxymuconolactone decarboxylase (Pseudomonas putida (Arthrobacter siderocapsulatus)).